Here is a 1555-residue protein sequence, read N- to C-terminus: Bromodomain adjacent to zinc finger domain protein 1A (1555 aa).

The interval methionine 1 to asparagine 128 is required for association with the CHRAC1/POLE3 complex. The interval methionine 1–asparagine 128 is required for interaction with the CHRAC1-POLE3 heterodimer. Required for interaction with the CHRAC1-POLE3 heterodimer. Residues methionine 1–glutamine 133 are required for interaction with NCOR1. The 107-residue stretch at glutamate 22–asparagine 128 folds into the WAC domain. Serine 270 and serine 284 each carry phosphoserine. One can recognise a DDT domain in the interval proline 422–glutamate 488. Residues isoleucine 635–valine 701 are a coiled coil. Basic and acidic residues-rich tracts occupy residues leucine 652–threonine 664 and arginine 671–arginine 696. The disordered stretch occupies residues leucine 652 to glutamine 751. The interval isoleucine 668–leucine 935 is interaction with SMARCA5. The interval isoleucine 668 to leucine 935 is required for interaction with SMARCA5 and formation of the CHRAC ISWI chromatin remodeling complex. Composition is skewed to acidic residues over residues glycine 705 to threonine 714 and proline 728 to aspartate 737. The residue at position 732 (threonine 732) is a Phosphothreonine. The stretch at serine 773–alanine 798 forms a coiled coil. Disordered stretches follow at residues proline 843–aspartate 874 and histidine 944–serine 969. Over residues serine 864 to leucine 873 the composition is skewed to low complexity. Residue lysine 954 forms a Glycyl lysine isopeptide (Lys-Gly) (interchain with G-Cter in SUMO2) linkage. Phosphoserine occurs at positions 962 and 963. Residues asparagine 1149–lysine 1199 form a PHD-type zinc finger. Residues arginine 1203 to glycine 1429 are disordered. The span at glutamate 1214–alanine 1258 shows a compositional bias: acidic residues. The span at lysine 1263–glycine 1277 shows a compositional bias: basic residues. At serine 1282 the chain carries Phosphoserine. Over residues serine 1297–lysine 1313 the composition is skewed to polar residues. Phosphoserine occurs at positions 1320, 1339, 1352, 1370, 1401, 1412, and 1416. Positions histidine 1369 to glutamine 1386 are enriched in polar residues. Residues glycine 1429–leucine 1532 form the Bromo domain. The residue at position 1546 (threonine 1546) is a Phosphothreonine.

It belongs to the WAL family. Component of the ACF-1 ISWI chromatin remodeling complex at least composed of SMARCA1 and BAZ1A, which regulates the spacing of histone octamers on the DNA template to facilitate access to DNA. Within the ACF-1 ISWI chromatin remodeling complex interacts with SMARCA1; the interaction is direct. Component of the ACF-5 ISWI chromatin remodeling complex (also called the ACF complex) at least composed of BAZ1A and SMARCA5/SNF2H, which regulates the spacing of histone octamers on the DNA template to facilitate access to DNA. Within the ACF-5 ISWI chromatin remodeling complex interacts with SMARCA5/SNF2H; the interaction is direct. Component of the CHRAC ISWI chromatin remodeling complex at least composed of SMARCA5/SNF2H, BAZ1A/ACF1, CHRAC1 and POLE3; the complex preferentially binds DNA through the CHRAC1-POLE3 heterodimer and possesses ATP-dependent nucleosome-remodeling activity. Within the complex interacts (via N-terminus) with POLE3-CHRAC1 heterodimer; the interaction is direct and is required for the complex to preferentially bind to DNA. Within the complex interacts with SMARCA5/SNF2H; the interaction is direct and promotes the interaction with the POLE3-CHRAC1 heterodimer. Interacts with NCOR1 (via its RD1 domain); the interaction corepresses a number of NCOR1-regulated genes.

It localises to the nucleus. Functionally, regulatory subunit of the ATP-dependent ACF-1 and ACF-5 ISWI chromatin remodeling complexes, which form ordered nucleosome arrays on chromatin and slide edge- and center-positioned histone octamers away from their original location on the DNA template to facilitate access to DNA during DNA-templated processes such as DNA replication, transcription, and repair. Both complexes regulate the spacing of nucleosomes along the chromatin and have the ability to slide mononucleosomes to the center of a DNA template in an ATP-dependent manner. The ACF-1 ISWI chromatin remodeling complex has a lower ATP hydrolysis rate than the ACF-5 ISWI chromatin remodeling complex. Has a role in sensing the length of DNA which flank nucleosomes, which modulates the nucleosome spacing activity of the ACF-5 ISWI chromatin remodeling complex. Involved in DNA replication and together with SMARCA5/SNF2H is required for replication of pericentric heterochromatin in S-phase. May have a role in nuclear receptor-mediated transcription repression. The chain is Bromodomain adjacent to zinc finger domain protein 1A (Baz1a) from Mus musculus (Mouse).